The following is a 183-amino-acid chain: A-type ATP synthase subunit E (183 aa).

Belongs to the V-ATPase E subunit family. Has multiple subunits with at least A(3), B(3), C, D, E, F, H, I and proteolipid K(x).

It localises to the cell membrane. In terms of biological role, component of the A-type ATP synthase that produces ATP from ADP in the presence of a proton gradient across the membrane. The chain is A-type ATP synthase subunit E from Methanosarcina barkeri (strain Fusaro / DSM 804).